A 433-amino-acid polypeptide reads, in one-letter code: Citrate synthase, mitochondrial (433 aa).

Active-site residues include H274 and H320. R329 serves as a coordination point for oxaloacetate. D375 is a catalytic residue. Residues R401 and R421 each coordinate oxaloacetate.

The protein belongs to the citrate synthase family. Homodimer.

It is found in the mitochondrion matrix. The enzyme catalyses oxaloacetate + acetyl-CoA + H2O = citrate + CoA + H(+). It participates in carbohydrate metabolism; tricarboxylic acid cycle; isocitrate from oxaloacetate: step 1/2. In terms of biological role, key enzyme of the Krebs tricarboxylic acid cycle which catalyzes the synthesis of citrate from acetyl coenzyme A and oxaloacetate. This is Citrate synthase, mitochondrial (CS) from Gallus gallus (Chicken).